Consider the following 334-residue polypeptide: NAC domain-containing protein 66 (334 aa).

An NAC domain is found at 11-175 (VPPGFRFHPT…GWVVCRVFKK (165 aa)). A DNA-binding region spans residues 111–181 (IGMRKTLVFY…VFKKNNLCKN (71 aa)).

In terms of tissue distribution, mostly expressed in anthers. Also present in pollen, base of siliques and inflorescence stems.

The protein localises to the nucleus. Transcription activator of genes involved in biosynthesis of secondary walls. Together with NST1, required for the secondary cell wall thickening of the anther endocethium, which is necessary for anther dehiscence. May also regulate the secondary cell wall lignification of other tissues such as tracheary elements. The polypeptide is NAC domain-containing protein 66 (NAC066) (Arabidopsis thaliana (Mouse-ear cress)).